Reading from the N-terminus, the 224-residue chain is Metalloproteinase inhibitor 4 (224 aa).

The first 29 residues, 1-29 (MPGSPRPAPSWVLLLRLLALLRPPGLGEA), serve as a signal peptide directing secretion. Cysteine 30 serves as a coordination point for Zn(2+). Involved in metalloproteinase-binding stretches follow at residues 30–33 (CSCA) and 99–100 (SS). Cystine bridges form between cysteine 30–cysteine 102, cysteine 32–cysteine 131, cysteine 42–cysteine 156, cysteine 158–cysteine 205, cysteine 163–cysteine 168, and cysteine 176–cysteine 197. Residues 30–156 (CSCAPAHPQQ…SLNHHYHLNC (127 aa)) enclose the NTR domain.

This sequence belongs to the protease inhibitor I35 (TIMP) family. Abundant in heart and present at low levels in many other tissues.

The protein resides in the secreted. In terms of biological role, complexes with metalloproteinases (such as collagenases) and irreversibly inactivates them by binding to their catalytic zinc cofactor. Known to act on MMP-1, MMP-2, MMP-3, MMP-7 and MMP-9. The polypeptide is Metalloproteinase inhibitor 4 (TIMP4) (Homo sapiens (Human)).